The primary structure comprises 569 residues: Urease subunit beta (569 aa).

Residues glycine 131–phenylalanine 569 form the Urease domain. Positions 136, 138, and 219 each coordinate Ni(2+). The residue at position 219 (lysine 219) is an N6-carboxylysine. Histidine 221 is a substrate binding site. Ni(2+) contacts are provided by histidine 248 and histidine 274. Histidine 322 (proton donor) is an active-site residue. A Ni(2+)-binding site is contributed by aspartate 362.

Belongs to the metallo-dependent hydrolases superfamily. Urease alpha subunit family. Heterohexamer of 3 UreA (alpha) and 3 UreB (beta) subunits. Ni cation is required as a cofactor. Carboxylation allows a single lysine to coordinate two nickel ions.

Its subcellular location is the cytoplasm. The enzyme catalyses urea + 2 H2O + H(+) = hydrogencarbonate + 2 NH4(+). It participates in nitrogen metabolism; urea degradation; CO(2) and NH(3) from urea (urease route): step 1/1. The protein is Urease subunit beta of Helicobacter pylori (strain P12).